Consider the following 187-residue polypeptide: MGNKQTIFTEEQLDNYQDCTFFNKKDILKLHSRFYELAPNLVPMDYRKSPIVHVPMSLIIQMPELRENPFKERIVAAFSEDGEGNLTFNDFVDMFSVLCESAPRELKANYAFKIYDFNTDNFICKEDLELTLARLTKSELDEEEVVLVCDKVIEEADLDGDGKLGFADFEDMIAKAPDFLSTFHIRI.

EF-hand domains are found at residues 66-101, 103-138, and 144-179; these read RENP…LCES, PREL…LTKS, and EVVL…APDF. The Ca(2+) site is built by Asp116, Asn118, Asp120, Asp127, Asp157, Asp159, Asp161, Lys163, and Asp168.

Monomer. Homodimer. Interacts with WHRN and MYO7A. Interacts with ITGA2B (via C-terminus cytoplasmic tail region); the interactions are stabilized/increased in a calcium and magnesium-dependent manner. Interacts with ITGA7 (via C-terminus cytoplasmic tail region); the interactions are stabilized/increased in a calcium and magnesium-dependent manner. Interacts with TMC1. Interacts with TMC2. As to expression, widely expressed.

The protein resides in the cytoplasm. Its subcellular location is the cell projection. It localises to the stereocilium. The protein localises to the photoreceptor inner segment. It is found in the cilium. The protein resides in the photoreceptor outer segment. Its subcellular location is the cell membrane. It localises to the sarcolemma. Its function is as follows. Calcium- and integrin-binding protein that plays a role in intracellular calcium homeostasis. Acts as an auxiliary subunit of the sensory mechanoelectrical transduction (MET) channel in hair cells. Essential for mechanoelectrical transduction (MET) currents in auditory hair cells and thereby required for hearing. Regulates the function of hair cell mechanotransduction by controlling the distribution of transmembrane channel-like proteins TMC1 and TMC2, and by regulating the function of the MET channels in hair cells. Required for the maintenance of auditory hair cell stereocilia bundle morphology and function and for hair-cell survival in the cochlea. Critical for proper photoreceptor cell maintenance and function. Plays a role in intracellular calcium homeostasis by decreasing ATP-induced calcium release. In Homo sapiens (Human), this protein is Calcium and integrin-binding family member 2 (CIB2).